We begin with the raw amino-acid sequence, 346 residues long: MTPAKAPSHAKKPEAGSQPISSMWTQMFPPKPTYTEEHMPDLSGKIYIVTGASSGVGKETSRMLYSKNAKVYMAMRSGAKAAAAMADIQRAVPKSSGALVILPLDLADLSAVKKAAEEFVSLESSLHGLINNAGVQVLDDTNGEARTAQGHEIHIGVNVLGPFLFTQLLRGVLAATAGRAQPDTVRIVWVSSMGTETIGEKGRGLSADYVDYWPLMSPLERYGLSKAGNWLQGAECAKRYAGDGILSFPINPGHLKSELYREGGTLFKLALRPVLFPPAYGSYVELFAALSPTLSTKDSGAWIVPWGRLYPIRSDLLDATKSAAEGGNGHASAFWDWCEEQVKAFL.

Residues 1–35 are disordered; it reads MTPAKAPSHAKKPEAGSQPISSMWTQMFPPKPTYT. 4 residues coordinate NADP(+): Val56, Lys80, Asp105, and Asn132. Ser191 functions as the Proton donor in the catalytic mechanism. 2 residues coordinate NADP(+): Tyr222 and Lys226. Tyr222 acts as the Proton acceptor in catalysis. Lys226 acts as the Lowers pKa of active site Tyr in catalysis.

The protein belongs to the short-chain dehydrogenases/reductases (SDR) family.

It carries out the reaction dehydroprobetaenone I + AH2 = probetaenone I + A. It participates in mycotoxin biosynthesis. Its function is as follows. Short-chain dehydrogenase/reductase; part of the gene cluster that mediates the biosynthesis of betaenones, phytotoxic polyketides involved in leaf spot disease in sugar beets. The first step of the pathway is the synthesis of dehydroprobetaenone I by the polyketide synthase bet1 and the enoyl reductase bet3 via condensation of one acetyl-CoA starter unit with 7 malonyl-CoA units and 5 methylations. The C-terminal reductase (R) domain of bet1 catalyzes the reductive release of the polyketide chain. Because bet1 lacks a designated enoylreductase (ER) domain, the required activity is provided the enoyl reductase bet3. The short-chain dehydrogenase/reductase bet4 then catalyzes reduction of dehydroprobetaenone I to probetaenone I. The cytochrome P450 monooxygenase bet2 catalyzes successive epoxidation, oxidation (resulting from epoxide opening) and hydroxylation to install a tertiary alcohol in the decaline ring to yield betaenone C from dehydroprobetaenone I and betaenone B from probetaenone I. The FAD-linked oxidoreductase (orf1) is probably responsible for the conversion of betaenone C to betaenone A via an intramolecular aldol reaction between C-1 and C-17 to form the bridged tricyclic system in betaenone A. The sequence is that of Short-chain dehydrogenase/reductase bet4 from Neocamarosporium betae (Beet black rot fungus).